Reading from the N-terminus, the 666-residue chain is 7SK snRNA methylphosphate capping enzyme (666 aa).

Methionine 1 carries the post-translational modification N-acetylmethionine. A compositionally biased stretch (basic and acidic residues) spans 1 to 10 (MIEMAAEKEP). Residues 1 to 141 (MIEMAAEKEP…GSGGSFKHPA (141 aa)) are disordered. Positions 50–61 (GPGPRAHSAGAA) are enriched in low complexity. Serine 57 is modified (phosphoserine). Arginine 91 bears the Omega-N-methylarginine mark. Serine 126, serine 150, and serine 154 each carry phosphoserine. Position 188 is a phosphothreonine (threonine 188). Phosphoserine is present on residues serine 191, serine 192, and serine 229. Positions 235 to 244 (RKRHRHRGPH) are enriched in basic residues. The disordered stretch occupies residues 235–291 (RKRHRHRGPHHQQQQQASGGNDSNAAVLPTDPLTPSLHGEGATQQQQNRGQNRDAPQ). The span at 245–254 (HQQQQQASGG) shows a compositional bias: low complexity. Threonine 268 carries the phosphothreonine modification. Serine 307 and serine 321 each carry phosphoserine. Positions 309–337 (LPSALQGSSGSLSAPPAASVTSAPSTSSS) are enriched in low complexity. The interval 309–383 (LPSALQGSSG…HHHPLPATGF (75 aa)) is disordered. The span at 338-347 (SRHRKRRRTS) shows a compositional bias: basic residues. Position 368 is a phosphoserine (serine 368). Residues tyrosine 399, arginine 410, 428–430 (GCN), 451–452 (DI), 536–537 (NY), and phenylalanine 558 contribute to the S-adenosyl-L-methionine site. The Bin3-type SAM domain maps to 408–663 (DVRLRVLKPE…PVYLFHKARS (256 aa)). Lysine 620 is covalently cross-linked (Glycyl lysine isopeptide (Lys-Gly) (interchain with G-Cter in SUMO2)).

This sequence belongs to the methyltransferase superfamily. In terms of assembly, core component of the 7SK RNP complex, at least composed of 7SK RNA, LARP7, MEPCE, HEXIM1 (or HEXIM2) and P-TEFb (composed of CDK9 and CCNT1/cyclin-T1). Interacts with METTL16. Interacts with RBM7; upon genotoxic stress this interaction is enhanced, triggering the release of inactive P-TEFb complex from the core, yielding to P-TEFb complex activation. In terms of processing, dephosphorylated at Ser-126 by the PNUTS-PP1 complex, promoting RNA polymerase II transcription pause-release.

The protein localises to the nucleus. The enzyme catalyses a 5'-end triphospho-guanosine-ribonucleotide-snRNA + S-adenosyl-L-methionine = a 5'-end methyltriphosphate-guanosine-ribonucleotide-snRNA + S-adenosyl-L-homocysteine. Functionally, S-adenosyl-L-methionine-dependent methyltransferase that adds a methylphosphate cap at the 5'-end of 7SK snRNA (7SK RNA), leading to stabilize it. Also has a non-enzymatic function as part of the 7SK RNP complex: the 7SK RNP complex sequesters the positive transcription elongation factor b (P-TEFb) in a large inactive 7SK RNP complex preventing RNA polymerase II phosphorylation and subsequent transcriptional elongation. The 7SK RNP complex also promotes snRNA gene transcription by RNA polymerase II via interaction with the little elongation complex (LEC). In the 7SK RNP complex, MEPCE is required to stabilize 7SK RNA and facilitate the assembly of 7SK RNP complex. MEPCE has a non-enzymatic function in the 7SK RNP complex; it has a non-enzymatic function; interaction with LARP7 within the 7SK RNP complex occluding its catalytic center. Also required for stability of U6 snRNAs. This Mus musculus (Mouse) protein is 7SK snRNA methylphosphate capping enzyme.